Here is a 575-residue protein sequence, read N- to C-terminus: Putative export ATP-binding/permease protein RBE_0492 (575 aa).

One can recognise an ABC transmembrane type-1 domain in the interval 20–303 (LIIVIISLLS…IFELLSEMHL (284 aa)). 6 helical membrane passes run 21-41 (IIVIISLLSVSLALLLIGNVF), 61-81 (ILYICLLIIILSIASFFRSYF), 135-155 (FLSFFIRNSVMLVGSIILMFF), 158-178 (FKLASIVIITIPLLLIPIIKF), 242-262 (ALFFAFSMAFIFLGVTLVIWI), and 277-297 (IISFIYYAIIAGFSSGGIFEL). The ABC transporter domain occupies 336–571 (LEFKNVNFSY…SDLYRTIYKE (236 aa)). Residue 371–378 (GRSGSGKS) coordinates ATP.

The protein belongs to the ABC transporter superfamily. In terms of assembly, homodimer.

It localises to the cell inner membrane. Its function is as follows. Part of an ABC transporter complex. Transmembrane domains (TMD) form a pore in the inner membrane and the ATP-binding domain (NBD) is responsible for energy generation. In Rickettsia bellii (strain RML369-C), this protein is Putative export ATP-binding/permease protein RBE_0492.